The chain runs to 79 residues: Suppressor of tumorigenicity 20 protein (79 aa).

Expressed in leukocytes, lung, spleen, liver, heart, kidney, muscle and uterine cervix. Down-regulated in cervical cancer.

In terms of biological role, may act as a tumor suppressor. Promotes apoptosis of cancer cells. The chain is Suppressor of tumorigenicity 20 protein (ST20) from Homo sapiens (Human).